A 347-amino-acid polypeptide reads, in one-letter code: NADH-ubiquinone oxidoreductase chain 2 (347 aa).

Helical transmembrane passes span 3–23 (PMIFIILLATIMLGSSIVMMS), 25–45 (HWFMTWLGFEMNMMAIVPVLM), 59–79 (YFLTQATASMILMLAIIINLM), 96–116 (MLITIALVMKLGLAPFHFWVP), 122–142 (IPLSSGLILLTWQKIAPLSLL), 149–169 (INMELFLTMSLLSIVIGGWGG), 201–221 (SFLNLLVYILMTSSMFALLIF), 239–259 (IIATMSLIILLSLGGLPPLTG), 274–294 (NSTILPTLMAISALLNLFFYI), and 326–346 (ILPLITISTLALPLTPLFLML).

It belongs to the complex I subunit 2 family. Core subunit of respiratory chain NADH dehydrogenase (Complex I) which is composed of 45 different subunits. Interacts with TMEM242.

The protein resides in the mitochondrion inner membrane. The enzyme catalyses a ubiquinone + NADH + 5 H(+)(in) = a ubiquinol + NAD(+) + 4 H(+)(out). Functionally, core subunit of the mitochondrial membrane respiratory chain NADH dehydrogenase (Complex I) that is believed to belong to the minimal assembly required for catalysis. Complex I functions in the transfer of electrons from NADH to the respiratory chain. The immediate electron acceptor for the enzyme is believed to be ubiquinone. In Crocidura hildegardeae (Hildegarde's shrew), this protein is NADH-ubiquinone oxidoreductase chain 2.